Consider the following 1310-residue polypeptide: Rho family-interacting cell polarization regulator 2 (1310 aa).

2 positions are modified to phosphoserine: serine 123 and serine 178. Residues 196 to 254 (MHNLGHKNTNTPKEPQPKRVEEVYRALKNGLDEYLEFHQTELDKLTAQLKDMKRNSRLG) are involved in cell filopodia formation. Residues 224 to 253 (NGLDEYLEFHQTELDKLTAQLKDMKRNSRL) are a coiled coil. Residue serine 508 is modified to Phosphoserine. Residues 588 to 608 (SSLSSQNEGTEDSSSASSRNS) are compositionally biased toward polar residues. Positions 588–639 (SSLSSQNEGTEDSSSASSRNSLGEDHEPKSHSKSDTVEPKKPSVDARSGTES) are disordered. The segment covering 609–631 (LGEDHEPKSHSKSDTVEPKKPSV) has biased composition (basic and acidic residues). At serine 682 the chain carries Phosphoserine.

It belongs to the RIPOR family. As to quaternary structure, homooligomer; homooligomerization is regulated by RHOC and leads to the formation of concatemers through the association of N- and C-termini. Interacts (phosphorylated form) with 14-3-3 proteins; these interactions occur during myogenic cell differentiation and also induces T cell proliferation arrest. Interacts (phosphorylated form) with HDAC6; this interaction occurs during early myogenic differentiation, prevents HDAC6 to deacetylate tubulin and also induces T cell proliferation arrest. Interacts with DYSF; this interaction occurs during early myogenic differentiation. Interacts with MYOF. Interacts (via active GTP- or inactive GDP-bound forms) with RHOA; this interaction is direct, blocks the loading of GTP to RHOA and decreases upon chemokine CCL19 stimulation in primary T lymphocytes. Interacts with RHOC. Interacts (via phosphorylated form) with YWHAB; this interaction occurs in a chemokine-dependent manner and does not compete for binding of RIPOR2 with RHOA nor blocks inhibition of RIPOR2-mediated RHOA activity. Interacts with YWHAE. Interacts with YWHAQ. In terms of processing, phosphorylated. Chemokine-induced phosphorylation in neutrophils occurs in a PKC- and AKT-dependent manner, resulting in RIPOR2 interaction with YWHAB and stabilization. Phosphorylated by PKCA, AKT1 and MAPKAPK1A; in vitro. Expressed in the cochlea (at protein level).

It is found in the cytoplasm. Its subcellular location is the cytoskeleton. The protein resides in the cell projection. It localises to the filopodium. The protein localises to the apical cell membrane. It is found in the stereocilium. Its subcellular location is the stereocilium membrane. Functionally, acts as an inhibitor of the small GTPase RHOA and plays several roles in the regulation of myoblast and hair cell differentiation, lymphocyte T proliferation and neutrophil polarization. Plays a role in fetal mononuclear myoblast differentiation by promoting filopodia and myotube formation. Maintains naive T lymphocytes in a quiescent state and prevents chemokine-induced T lymphocyte responses, such as cell adhesion, polarization and migration. Involved also in the regulation of neutrophil polarization, chemotaxis and adhesion. Required for normal development of inner and outer hair cell stereocilia within the cochlea of the inner ear. Plays a role for maintaining the structural organization of the basal domain of stereocilia. Involved in mechanosensory hair cell function. Required for normal hearing. In Rattus norvegicus (Rat), this protein is Rho family-interacting cell polarization regulator 2.